We begin with the raw amino-acid sequence, 299 residues long: Adenylate kinase (299 aa).

The segment at 1–30 (MATTTTRGARDSPFPAPSEGEIKKELNMKG) is disordered. 85–90 (GAGKGT) contacts ATP. The NMP stretch occupies residues 107-136 (ATGDMLREQVSKQTELGKMAKKIMDQGGLV). Residues Thr108, Arg113, 134–136 (GLV), 163–166 (GFPR), and Gln170 contribute to the AMP site. The interval 204–241 (GRLVHPASGRSYHKEFSPPKKPMTDDVTGEPLIQRSDD) is LID. Residues Arg205 and 214 to 215 (SY) contribute to the ATP site. A disordered region spans residues 212 to 237 (GRSYHKEFSPPKKPMTDDVTGEPLIQ). Residues 215–227 (YHKEFSPPKKPMT) are compositionally biased toward basic and acidic residues. The AMP site is built by Arg238 and Arg249. An ATP-binding site is contributed by Gln277.

Belongs to the adenylate kinase family. AK2 subfamily. As to quaternary structure, monomer.

The protein resides in the cytoplasm. It localises to the cytosol. The protein localises to the mitochondrion intermembrane space. The catalysed reaction is AMP + ATP = 2 ADP. Its function is as follows. Catalyzes the reversible transfer of the terminal phosphate group between ATP and AMP. Plays an important role in cellular energy homeostasis and in adenine nucleotide metabolism. Adenylate kinase activity is critical for regulation of the phosphate utilization and the AMP de novo biosynthesis pathways. This is Adenylate kinase from Mycosarcoma maydis (Corn smut fungus).